The chain runs to 312 residues: Pantothenate kinase (312 aa).

Position 97-104 (97-104) interacts with ATP; sequence GSVAVGKS.

It belongs to the prokaryotic pantothenate kinase family.

Its subcellular location is the cytoplasm. It carries out the reaction (R)-pantothenate + ATP = (R)-4'-phosphopantothenate + ADP + H(+). Its pathway is cofactor biosynthesis; coenzyme A biosynthesis; CoA from (R)-pantothenate: step 1/5. The protein is Pantothenate kinase (coaA) of Mycobacterium leprae (strain TN).